The sequence spans 233 residues: Pirin-like protein YhaK (233 aa).

This sequence belongs to the pirin family. Monomer.

The protein resides in the cytoplasm. Functionally, does not have quercetin 2,3-dioxygenase activity. The chain is Pirin-like protein YhaK (yhaK) from Escherichia coli (strain K12).